We begin with the raw amino-acid sequence, 118 residues long: Large ribosomal subunit protein uL24 (118 aa).

The protein belongs to the universal ribosomal protein uL24 family. As to quaternary structure, part of the 50S ribosomal subunit.

Functionally, one of two assembly initiator proteins, it binds directly to the 5'-end of the 23S rRNA, where it nucleates assembly of the 50S subunit. In terms of biological role, one of the proteins that surrounds the polypeptide exit tunnel on the outside of the subunit. This Prochlorococcus marinus subsp. pastoris (strain CCMP1986 / NIES-2087 / MED4) protein is Large ribosomal subunit protein uL24.